We begin with the raw amino-acid sequence, 466 residues long: Soluble pyridine nucleotide transhydrogenase (466 aa).

Position 36-45 (36-45 (ERYQNVGGGC)) interacts with FAD.

It belongs to the class-I pyridine nucleotide-disulfide oxidoreductase family. It depends on FAD as a cofactor.

Its subcellular location is the cytoplasm. The enzyme catalyses NAD(+) + NADPH = NADH + NADP(+). In terms of biological role, conversion of NADPH, generated by peripheral catabolic pathways, to NADH, which can enter the respiratory chain for energy generation. The chain is Soluble pyridine nucleotide transhydrogenase from Shigella boydii serotype 18 (strain CDC 3083-94 / BS512).